A 343-amino-acid chain; its full sequence is Protein RecA (343 aa).

66–73 (GPESSGKT) is a binding site for ATP.

This sequence belongs to the RecA family.

Its subcellular location is the cytoplasm. Can catalyze the hydrolysis of ATP in the presence of single-stranded DNA, the ATP-dependent uptake of single-stranded DNA by duplex DNA, and the ATP-dependent hybridization of homologous single-stranded DNAs. It interacts with LexA causing its activation and leading to its autocatalytic cleavage. In Rickettsia conorii (strain ATCC VR-613 / Malish 7), this protein is Protein RecA.